The sequence spans 167 residues: Ureidoglycolate lyase (167 aa).

Belongs to the ureidoglycolate lyase family. Homodimer. Requires Ni(2+) as cofactor.

The enzyme catalyses (S)-ureidoglycolate = urea + glyoxylate. It participates in nitrogen metabolism; (S)-allantoin degradation. Its function is as follows. Catalyzes the catabolism of the allantoin degradation intermediate (S)-ureidoglycolate, generating urea and glyoxylate. Involved in the utilization of allantoin as nitrogen source. The polypeptide is Ureidoglycolate lyase (Pseudomonas fluorescens (strain ATCC BAA-477 / NRRL B-23932 / Pf-5)).